A 410-amino-acid polypeptide reads, in one-letter code: Trans-splicing factor Raa2, chloroplastic (410 aa).

Disordered stretches follow at residues 1 to 40 and 56 to 106; these read MRTR…QRPA and AADH…QQQV. Residues 1–46 constitute a chloroplast transit peptide; it reads MRTRAGAFFGKQRSTSPSGSSTSASRQWLRSSPGRTQRPAAHRVLA. Low complexity predominate over residues 14-25; sequence STSPSGSSTSAS. Over residues 26-35 the composition is skewed to polar residues; it reads RQWLRSSPGR. Residues 96 to 106 are compositionally biased toward low complexity; that stretch reads RQAQRRQQQQV.

It belongs to the pseudouridine synthase TruB family. As to quaternary structure, possibly associated with other factors required for trans-splicing.

The protein resides in the plastid. The protein localises to the chloroplast. Functionally, required for trans-splicing of exons 2 and 3 of the chloroplast encoded psaA mRNA (a group II intron). It is not known if this protein has pseudouridine activity; mutation of the potential active site residue does not cause loss of trans-splicing. This Chlamydomonas reinhardtii (Chlamydomonas smithii) protein is Trans-splicing factor Raa2, chloroplastic (RAA2).